The chain runs to 259 residues: Imidazole glycerol phosphate synthase subunit HisF (259 aa).

Active-site residues include Asp11 and Asp130.

It belongs to the HisA/HisF family. As to quaternary structure, heterodimer of HisH and HisF.

The protein localises to the cytoplasm. It catalyses the reaction 5-[(5-phospho-1-deoxy-D-ribulos-1-ylimino)methylamino]-1-(5-phospho-beta-D-ribosyl)imidazole-4-carboxamide + L-glutamine = D-erythro-1-(imidazol-4-yl)glycerol 3-phosphate + 5-amino-1-(5-phospho-beta-D-ribosyl)imidazole-4-carboxamide + L-glutamate + H(+). Its pathway is amino-acid biosynthesis; L-histidine biosynthesis; L-histidine from 5-phospho-alpha-D-ribose 1-diphosphate: step 5/9. In terms of biological role, IGPS catalyzes the conversion of PRFAR and glutamine to IGP, AICAR and glutamate. The HisF subunit catalyzes the cyclization activity that produces IGP and AICAR from PRFAR using the ammonia provided by the HisH subunit. The sequence is that of Imidazole glycerol phosphate synthase subunit HisF from Desulfovibrio desulfuricans (strain ATCC 27774 / DSM 6949 / MB).